The primary structure comprises 31 residues: Phalloidin proprotein (31 aa).

Residues 1 to 10 constitute a propeptide that is removed on maturation; that stretch reads MSDINATRLP. Positions 11 to 17 form a cross-link, cyclopeptide (Ala-Pro); the sequence is AWLATCP. A cross-link (2'-cysteinyl-6'-hydroxytryptophan sulfoxide (Trp-Cys)) is located at residues 12–16; that stretch reads WLATC. Positions 18-31 are excised as a propeptide; that stretch reads CAGDDVNPLLTRGE.

The protein belongs to the MSDIN fungal toxin family. Post-translationally, processed by the macrocyclase-peptidase enzyme POPB to yield a toxic cyclic heptapeptide. POPB first removes 10 residues from the N-terminus. Conformational trapping of the remaining peptide forces the enzyme to release this intermediate rather than proceed to macrocyclization. The enzyme rebinds the remaining peptide in a different conformation and catalyzes macrocyclization of the N-terminal 7 residues.

In terms of biological role, major toxin that belongs to the bicyclic heptapeptides called phallotoxins. Although structurally related to amatoxins, phallotoxins have a different mode of action, which is the stabilization of F-actin. Phallotoxins are poisonous when administered parenterally, but not orally because of poor absorption. The chain is Phalloidin proprotein from Amanita ocreata (Western North American destroying angel).